A 113-amino-acid polypeptide reads, in one-letter code: Large ribosomal subunit protein uL22 (113 aa).

It belongs to the universal ribosomal protein uL22 family. In terms of assembly, part of the 50S ribosomal subunit.

Functionally, this protein binds specifically to 23S rRNA; its binding is stimulated by other ribosomal proteins, e.g. L4, L17, and L20. It is important during the early stages of 50S assembly. It makes multiple contacts with different domains of the 23S rRNA in the assembled 50S subunit and ribosome. The globular domain of the protein is located near the polypeptide exit tunnel on the outside of the subunit, while an extended beta-hairpin is found that lines the wall of the exit tunnel in the center of the 70S ribosome. In Geobacillus sp. (strain WCH70), this protein is Large ribosomal subunit protein uL22.